The following is a 706-amino-acid chain: Ribosomal RNA large subunit methyltransferase K/L (706 aa).

In terms of domain architecture, THUMP spans 43 to 154 (LMYQSLLWSR…RDMASVALDL (112 aa)).

The protein belongs to the methyltransferase superfamily. RlmKL family.

Its subcellular location is the cytoplasm. It carries out the reaction guanosine(2445) in 23S rRNA + S-adenosyl-L-methionine = N(2)-methylguanosine(2445) in 23S rRNA + S-adenosyl-L-homocysteine + H(+). It catalyses the reaction guanosine(2069) in 23S rRNA + S-adenosyl-L-methionine = N(2)-methylguanosine(2069) in 23S rRNA + S-adenosyl-L-homocysteine + H(+). Its function is as follows. Specifically methylates the guanine in position 2445 (m2G2445) and the guanine in position 2069 (m7G2069) of 23S rRNA. In Yersinia pseudotuberculosis serotype IB (strain PB1/+), this protein is Ribosomal RNA large subunit methyltransferase K/L.